The chain runs to 130 residues: Protein Wnt-9 (130 aa).

S1 is lipidated: O-palmitoleoyl serine; by PORCN. The segment at 41-69 (AGERTIARSRRRPREQRGQRRPKVSDGAL) is disordered. Positions 47 to 62 (ARSRRRPREQRGQRRP) are enriched in basic residues. N-linked (GlcNAc...) asparagine glycosylation is present at N97. C100 and C111 are oxidised to a cystine.

The protein belongs to the Wnt family. Palmitoleoylation is required for efficient binding to frizzled receptors. Depalmitoleoylation leads to Wnt signaling pathway inhibition.

It is found in the secreted. Its subcellular location is the extracellular space. It localises to the extracellular matrix. Ligand for members of the frizzled family of seven transmembrane receptors. Probable developmental protein. May be a signaling molecule which affects the development of discrete regions of tissues. Is likely to signal over only few cell diameters. This chain is Protein Wnt-9 (WNT-9), found in Eptatretus stoutii (Pacific hagfish).